Reading from the N-terminus, the 172-residue chain is Scytalone dehydratase (172 aa).

Substrate contacts are provided by Tyr30, Tyr50, and Phe53. Active-site residues include His85 and His110. Residue Asn131 coordinates substrate.

This sequence belongs to the scytalone dehydratase family. In terms of assembly, homotrimer. Each subunit contains an active site, located in the central part of the hydrophobic core of the monomer, which functions independently.

It localises to the endosome. The enzyme catalyses scytalone = 1,3,8-trihydroxynaphthalene + H2O. Its pathway is pigment biosynthesis; melanin biosynthesis. (N-phenoxypropyl)-carboxamides such as carpropamid and derivatives of norephedrine act as inhibitors of scytalone dehydratase activity. Scytalone dehydratase; part of the gene cluster that mediates the biosynthesis of dihydroxynaphthalene melanin, a bluish-green pigment and a structural component of the conidial wall. Within the pathway, catalyzes the dehydration of scytalone as well as of vermelone. Is also able to dehydrate the alternate substrate 2,3-dihydro-2,5-dihydroxy-4H-benzopyran-4-one (DDBO) to 5-hydroxy-4H-1-benzopyran-4-one (HBO). The sequence is that of Scytalone dehydratase (SDH1) from Pyricularia oryzae (strain 70-15 / ATCC MYA-4617 / FGSC 8958) (Rice blast fungus).